The sequence spans 368 residues: Cytochrome b (368 aa).

The next 4 helical transmembrane spans lie at 25-45, 69-90, 105-125, and 170-190; these read FGSM…FLAM, WIMQ…YIHI, WLSG…GYVL, and FFAL…IHII. Heme b-binding residues include histidine 75 and histidine 89. 2 residues coordinate heme b: histidine 174 and histidine 188. Residue histidine 193 participates in a ubiquinone binding. The next 4 membrane-spanning stretches (helical) occupy residues 218-238, 280-300, 312-332, and 339-358; these read YKDM…MSFT, LGGT…PFTH, LTQT…WTAT, and FIFI…IINP.

This sequence belongs to the cytochrome b family. The cytochrome bc1 complex contains 3 respiratory subunits (MT-CYB, CYC1 and UQCRFS1), 2 core proteins (UQCRC1 and UQCRC2) and probably 6 low-molecular weight proteins. The cofactor is heme b.

The protein resides in the mitochondrion inner membrane. In terms of biological role, component of the ubiquinol-cytochrome c reductase complex (complex III or cytochrome b-c1 complex) that is part of the mitochondrial respiratory chain. The b-c1 complex mediates electron transfer from ubiquinol to cytochrome c. Contributes to the generation of a proton gradient across the mitochondrial membrane that is then used for ATP synthesis. This is Cytochrome b (MT-CYB) from Notechis ater (Black tiger snake).